The chain runs to 701 residues: Ribosomal RNA large subunit methyltransferase K/L (701 aa).

Residues 44 to 155 (QAYKICLWSR…SDKLTVYLDL (112 aa)) enclose the THUMP domain.

It belongs to the methyltransferase superfamily. RlmKL family.

The protein localises to the cytoplasm. The enzyme catalyses guanosine(2445) in 23S rRNA + S-adenosyl-L-methionine = N(2)-methylguanosine(2445) in 23S rRNA + S-adenosyl-L-homocysteine + H(+). It carries out the reaction guanosine(2069) in 23S rRNA + S-adenosyl-L-methionine = N(2)-methylguanosine(2069) in 23S rRNA + S-adenosyl-L-homocysteine + H(+). Specifically methylates the guanine in position 2445 (m2G2445) and the guanine in position 2069 (m7G2069) of 23S rRNA. In Pseudoalteromonas atlantica (strain T6c / ATCC BAA-1087), this protein is Ribosomal RNA large subunit methyltransferase K/L.